Consider the following 185-residue polypeptide: Class I hydrophobin SC6 (185 aa).

An N-terminal signal peptide occupies residues methionine 1–alanine 17. The interval histidine 70–asparagine 104 is disordered. The segment covering threonine 75–serine 93 has biased composition (low complexity). A compositionally biased stretch (polar residues) spans lysine 94–asparagine 104. 4 disulfide bridges follow: cysteine 103–cysteine 164, cysteine 110–cysteine 158, cysteine 111–cysteine 144, and cysteine 165–cysteine 178.

It belongs to the fungal hydrophobin family. Self-assembles to form functional amyloid fibrils called rodlets. Self-assembly into fibrillar rodlets occurs spontaneously at hydrophobic:hydrophilic interfaces and the rodlets further associate laterally to form amphipathic monolayers.

Its subcellular location is the secreted. It localises to the cell wall. In terms of biological role, aerial growth, conidiation, and dispersal of filamentous fungi in the environment rely upon a capability of their secreting small amphipathic proteins called hydrophobins (HPBs) with low sequence identity. Class I can self-assemble into an outermost layer of rodlet bundles on aerial cell surfaces, conferring cellular hydrophobicity that supports fungal growth, development and dispersal; whereas Class II form highly ordered films at water-air interfaces through intermolecular interactions but contribute nothing to the rodlet structure. SC6 is a dikaryon-specific class I hydrophobin that contributes to the formation of aerial hyphae and fruiting bodies. This is Class I hydrophobin SC6 from Schizophyllum commune (Split gill fungus).